Reading from the N-terminus, the 740-residue chain is ATP-dependent DNA helicase Hel308 (740 aa).

Residues Gln28 and 46–53 (IPTASGKT) each bind ATP. The region spanning 33-204 (RQGLLDGKNL…WMDAALVQSE (172 aa)) is the Helicase ATP-binding domain. The DEAH box signature appears at 149–152 (DEVH). One can recognise a Helicase C-terminal domain in the interval 236 to 436 (EVNSLVADTL…EPAMRAHALS (201 aa)). A disordered region spans residues 716–740 (VDHTPPETEEQPQVSGQSTLFSFDG). Polar residues predominate over residues 726-740 (QPQVSGQSTLFSFDG).

It belongs to the helicase family. Hel308 subfamily. In terms of assembly, monomer.

The enzyme catalyses Couples ATP hydrolysis with the unwinding of duplex DNA by translocating in the 3'-5' direction.. The catalysed reaction is ATP + H2O = ADP + phosphate + H(+). In terms of biological role, DNA-dependent ATPase and 3'-5' DNA helicase that may be involved in repair of stalled replication forks. The protein is ATP-dependent DNA helicase Hel308 of Methanocella arvoryzae (strain DSM 22066 / NBRC 105507 / MRE50).